The primary structure comprises 153 residues: Ubiquitin-conjugating enzyme E2 13 (153 aa).

One can recognise a UBC core domain in the interval 3–149 (SLPKRIIKET…AREWTKLYAK (147 aa)). Catalysis depends on C87, which acts as the Glycyl thioester intermediate. K92 is covalently cross-linked (Glycyl lysine isopeptide (Lys-Gly) (interchain with G-Cter in ubiquitin)).

The protein belongs to the ubiquitin-conjugating enzyme family. In terms of assembly, heterodimer with MMS2.

It catalyses the reaction S-ubiquitinyl-[E1 ubiquitin-activating enzyme]-L-cysteine + [E2 ubiquitin-conjugating enzyme]-L-cysteine = [E1 ubiquitin-activating enzyme]-L-cysteine + S-ubiquitinyl-[E2 ubiquitin-conjugating enzyme]-L-cysteine.. It participates in protein modification; protein ubiquitination. Has a role in the DNA error-free postreplication repair (PRR) pathway. The UBC13/MMS2 heterodimer catalyzes the synthesis of non-canonical poly-ubiquitin chains that are linked through 'Lys-63'. This Saccharomyces cerevisiae (strain ATCC 204508 / S288c) (Baker's yeast) protein is Ubiquitin-conjugating enzyme E2 13 (UBC13).